The sequence spans 231 residues: Large ribosomal subunit protein uL1 (231 aa).

Belongs to the universal ribosomal protein uL1 family. As to quaternary structure, part of the 50S ribosomal subunit.

Functionally, binds directly to 23S rRNA. The L1 stalk is quite mobile in the ribosome, and is involved in E site tRNA release. Protein L1 is also a translational repressor protein, it controls the translation of the L11 operon by binding to its mRNA. The protein is Large ribosomal subunit protein uL1 of Nitrosococcus oceani (strain ATCC 19707 / BCRC 17464 / JCM 30415 / NCIMB 11848 / C-107).